We begin with the raw amino-acid sequence, 963 residues long: Kinesin-1 heavy chain (963 aa).

Residue Ala2 is modified to N-acetylalanine. A Kinesin motor domain is found at 8–325; that stretch reads NIKVMCRFRP…LLFGQRAKTI (318 aa). 85-92 provides a ligand contact to ATP; it reads GQTSSGKT. Lys213 participates in a covalent cross-link: Glycyl lysine isopeptide (Lys-Gly) (interchain with G-Cter in SUMO2). Residues 329-914 are a coiled coil; it reads VCVNVELTAE…AVRSKNMARR (586 aa). A disordered region spans residues 908–963; that stretch reads SKNMARRGHSAQIAKPIRPGQHPAASPTHPSAIRGGGAFVQNSQPVAVRGGGGKQV. The interval 915-963 is globular; sequence GHSAQIAKPIRPGQHPAASPTHPSAIRGGGAFVQNSQPVAVRGGGGKQV. Phosphoserine is present on Ser933. The residue at position 956 (Arg956) is an Omega-N-methylarginine.

Belongs to the TRAFAC class myosin-kinesin ATPase superfamily. Kinesin family. Kinesin subfamily. In terms of assembly, oligomer composed of two heavy chains and two light chains. Interacts with GRIP1 and PPP1R42. Interacts with SYBU. Interacts with JAKMIP1. Interacts with PLEKHM2. Interacts with ECPAS. Interacts with ZFYVE27. Found in a complex with OGT, RHOT1, RHOT2 and TRAK1. Interacts with APP (via cytoplasmic domain).

It localises to the cytoplasm. The protein localises to the cytoskeleton. It is found in the cytolytic granule membrane. The protein resides in the lysosome membrane. Functionally, microtubule-dependent motor required for normal distribution of mitochondria and lysosomes. Can induce formation of neurite-like membrane protrusions in non-neuronal cells in a ZFYVE27-dependent manner. Regulates centrosome and nuclear positioning during mitotic entry. During the G2 phase of the cell cycle in a BICD2-dependent manner, antagonizes dynein function and drives the separation of nuclei and centrosomes. Required for anterograde axonal transportation of MAPK8IP3/JIP3 which is essential for MAPK8IP3/JIP3 function in axon elongation. Through binding with PLEKHM2 and ARL8B, directs lysosome movement toward microtubule plus ends. Involved in NK cell-mediated cytotoxicity. Drives the polarization of cytolytic granules and microtubule-organizing centers (MTOCs) toward the immune synapse between effector NK lymphocytes and target cells. This is Kinesin-1 heavy chain from Homo sapiens (Human).